Reading from the N-terminus, the 471-residue chain is ATP synthase subunit beta (471 aa).

157 to 164 provides a ligand contact to ATP; that stretch reads GGAGVGKT.

The protein belongs to the ATPase alpha/beta chains family. As to quaternary structure, F-type ATPases have 2 components, CF(1) - the catalytic core - and CF(0) - the membrane proton channel. CF(1) has five subunits: alpha(3), beta(3), gamma(1), delta(1), epsilon(1). CF(0) has three main subunits: a(1), b(2) and c(9-12). The alpha and beta chains form an alternating ring which encloses part of the gamma chain. CF(1) is attached to CF(0) by a central stalk formed by the gamma and epsilon chains, while a peripheral stalk is formed by the delta and b chains.

The protein resides in the cell inner membrane. The enzyme catalyses ATP + H2O + 4 H(+)(in) = ADP + phosphate + 5 H(+)(out). Produces ATP from ADP in the presence of a proton gradient across the membrane. The catalytic sites are hosted primarily by the beta subunits. This is ATP synthase subunit beta from Trichlorobacter lovleyi (strain ATCC BAA-1151 / DSM 17278 / SZ) (Geobacter lovleyi).